The following is a 208-amino-acid chain: Large ribosomal subunit protein uL3 (208 aa).

The disordered stretch occupies residues 117–149 (GFQGAIKRHGQSRGPMAHGSRYHRRPGSMGPVA).

This sequence belongs to the universal ribosomal protein uL3 family. Part of the 50S ribosomal subunit. Forms a cluster with proteins L14 and L19.

Its function is as follows. One of the primary rRNA binding proteins, it binds directly near the 3'-end of the 23S rRNA, where it nucleates assembly of the 50S subunit. This is Large ribosomal subunit protein uL3 from Exiguobacterium sp. (strain ATCC BAA-1283 / AT1b).